The chain runs to 148 residues: Large ribosomal subunit protein uL13 (148 aa).

This sequence belongs to the universal ribosomal protein uL13 family. As to quaternary structure, part of the 50S ribosomal subunit.

Its function is as follows. This protein is one of the early assembly proteins of the 50S ribosomal subunit, although it is not seen to bind rRNA by itself. It is important during the early stages of 50S assembly. The sequence is that of Large ribosomal subunit protein uL13 from Oenococcus oeni (strain ATCC BAA-331 / PSU-1).